A 467-amino-acid chain; its full sequence is Protein arginine methyltransferase NDUFAF7 homolog, mitochondrial (467 aa).

It belongs to the NDUFAF7 family.

The protein resides in the mitochondrion. The catalysed reaction is L-arginyl-[protein] + 2 S-adenosyl-L-methionine = N(omega),N(omega)'-dimethyl-L-arginyl-[protein] + 2 S-adenosyl-L-homocysteine + 2 H(+). In terms of biological role, arginine methyltransferase involved in the assembly or stability of mitochondrial NADH:ubiquinone oxidoreductase complex (complex I). The polypeptide is Protein arginine methyltransferase NDUFAF7 homolog, mitochondrial (Schizosaccharomyces pombe (strain 972 / ATCC 24843) (Fission yeast)).